Here is a 113-residue protein sequence, read N- to C-terminus: Protein translation factor SUI1 homolog 1 (113 aa).

The segment at 1 to 24 is disordered; it reads MSELDSQVPTAFDPFADANAEDSG. S2 carries the N-acetylserine modification.

It belongs to the SUI1 family.

Probably involved in translation. The sequence is that of Protein translation factor SUI1 homolog 1 from Arabidopsis thaliana (Mouse-ear cress).